A 226-amino-acid chain; its full sequence is 8-oxoguanine DNA glycosylase/AP lyase (226 aa).

Residues Lys149 and Asp167 contribute to the active site.

Belongs to the type-2 OGG1 family.

It catalyses the reaction 2'-deoxyribonucleotide-(2'-deoxyribose 5'-phosphate)-2'-deoxyribonucleotide-DNA = a 3'-end 2'-deoxyribonucleotide-(2,3-dehydro-2,3-deoxyribose 5'-phosphate)-DNA + a 5'-end 5'-phospho-2'-deoxyribonucleoside-DNA + H(+). In terms of biological role, catalyzes the excision of an oxidatively damaged form of guanine (7,8-dihydro-8-oxoguanine = 8-oxoG) from DNA. Also cleaves the DNA backbone at apurinic/apyrimidinic sites (AP sites). The polypeptide is 8-oxoguanine DNA glycosylase/AP lyase (Aquifex aeolicus (strain VF5)).